The chain runs to 478 residues: PRAME family member 27 (478 aa).

One copy of the LRR 1 repeat lies at 17–40; sequence RSLLRDQALAMSTLEELPTELFPP. An LRR 1; degenerate repeat occupies 99-126; the sequence is RWKLQVLDLQDVCENFWMVWSEAMARGS. The stretch at 181-205 is one LRR 2; degenerate repeat; sequence HLCCKKLKILGMPFRNIRSILKMVN. One copy of the LRR 3; degenerate repeat lies at 206–232; sequence LDCIQEVEVNCKWVLPILTQFTPYLGH. One copy of the LRR 4; degenerate repeat lies at 233–268; sequence MRNLQKLVLSHMDVSRYVSPEQKKEIVTQFTTQFLK. LRR repeat units lie at residues 269–294, 295–326, 327–348, 351–378, and 379–403; these read LHCL…LSCL, KTSL…SQLK, TLDL…ILLE, AATL…ALSR, and CFEL…LLSH.

This sequence belongs to the PRAME family.

In Homo sapiens (Human), this protein is PRAME family member 27.